The primary structure comprises 37 residues: Large ribosomal subunit protein bL36A (37 aa).

Belongs to the bacterial ribosomal protein bL36 family.

This is Large ribosomal subunit protein bL36A from Actinobacillus pleuropneumoniae serotype 3 (strain JL03).